Consider the following 405-residue polypeptide: Serine/threonine-protein kinase 2 (405 aa).

Residues 54 to 405 (NDDFYHISTG…IFSDWINGGN (352 aa)) form the Protein kinase domain. Residues 60 to 68 (ISTGGYGIV) and lysine 84 contribute to the ATP site. Aspartate 274 (proton acceptor) is an active-site residue.

The protein belongs to the protein kinase superfamily. Ser/Thr protein kinase family. Poxviruses subfamily. In terms of processing, phosphorylated in vivo. Autophosphorylated in vitro.

Its subcellular location is the host endoplasmic reticulum. It is found in the host endoplasmic reticulum-Golgi intermediate compartment. It catalyses the reaction L-seryl-[protein] + ATP = O-phospho-L-seryl-[protein] + ADP + H(+). The catalysed reaction is L-threonyl-[protein] + ATP = O-phospho-L-threonyl-[protein] + ADP + H(+). Essential serine-protein kinase involved in the early stage of virion morphogenesis. The protein is Serine/threonine-protein kinase 2 (OPG054) of Vaccinia virus (strain L-IVP) (VACV).